Reading from the N-terminus, the 206-residue chain is MMPYNTPPNIQEPMNFASSNPFGIIPDALSFQNFKYDRLQQQQQQQQQQQQNRTASSLQQPQQQQPISPPLFLVGAGTSENSNLNKNANTSTIPPLLFSRSSQHYVVPDIDHSSIIYKNNICKSFKDDLFFCPRSLLSLEEQQACEKMDRLTAEQMSLYHQNTQSSSNPGSMSSSPPNSASSIFNSRPKFNPYTSQSFNPLESVQE.

2 disordered regions span residues 38–88 (RLQQ…NKNA) and 160–206 (HQNT…SVQE). The span at 40–73 (QQQQQQQQQQQQNRTASSLQQPQQQQPISPPLFL) shows a compositional bias: low complexity. S68 is modified (phosphoserine). Over residues 78-88 (TSENSNLNKNA) the composition is skewed to polar residues. Over residues 165–186 (SSSNPGSMSSSPPNSASSIFNS) the composition is skewed to low complexity. Positions 192 to 206 (PYTSQSFNPLESVQE) are enriched in polar residues.

It localises to the cytoplasm. This is an uncharacterized protein from Saccharomyces cerevisiae (strain ATCC 204508 / S288c) (Baker's yeast).